A 537-amino-acid polypeptide reads, in one-letter code: MQTHLLILAAVVLLIIHIVNNFLIKPLQTLLKSRRLGCGPVPFEPTRWPLDIDTIRRSLKADKEQRTPDFVAGRFETMGRYTWGLSLLGTSNLITAEPRNVQALLATQFDDFIMGTARRTNLKTALGRSIFAVDGKAWHRARETMRPIFSRENVSRLELLEEHVQTMLQIIETKDEGLTTDANDRAWSAPVSLAVLLPRLTMDSATELFLGQSTHSLKKALARQQQKSGNEEHDADSFDHAFERMLAILGTRMRLRSLYWLYGNKELQKCINALHAFVDSAIDAADQARKSGSSQLRYDFLETLRTRCSDRAEVREQVLGLLAAGRDTTASLTAWVFYCLVRNPRVYKKLRDTVLAEFGPYSTNPGQKITFEKLKGCTYLQHVLNETLRLHSVVPFNSRCAARDTTLPVGGGPDGSMPVFVPKGTEVNFSTHVLHRRKDLWGEDADEFVPERWEKKRPGMTWQYVPFNGGPRICIGQQFALTEAGYVLVRMVQRYDVIEGLDIDVERDWHNFTVVCSPGSPVARDAAVMCRLRVAVE.

Residues 4–24 (HLLILAAVVLLIIHIVNNFLI) form a helical membrane-spanning segment. Residue Cys474 coordinates heme.

This sequence belongs to the cytochrome P450 family. It depends on heme as a cofactor.

Its subcellular location is the membrane. It participates in secondary metabolite biosynthesis. In terms of biological role, cytochrome P450 monooxygenase; part of the gene cluster that mediates the biosynthesis of alternapyrone derivatives. Alternapyrone is a decaketide with octa-methylation from methionine on every C2 unit except the third unit. All the domains in the polyketide synthase alt5 are apparently involved in alternapyrone synthesis, that is, the 8 CMeT, 7 KR, 7 DH, and 4 ER reactions in the 9 KS-mediated condensation steps required for alternapyrone synthesis. the alternapyrone produced by alt5 might be intensively modified by cytochrome P450 monooxygenases alt1, alt2 and alt3 and FAD-dependent oxidoreductase alt4 present in the alt gene cluster. This chain is Cytochrome P450 monooxygenase alt2, found in Alternaria solani.